The following is a 257-amino-acid chain: Inositol diphosphatase DSP2 (257 aa).

The Tyrosine-protein phosphatase domain maps to 66–251; that stretch reads NFSMVDNGIF…VSGLKHTPMS (186 aa). 1D-myo-inositol hexakisphosphate-binding residues include isoleucine 168 and lysine 172. The active-site Phosphocysteine intermediate is the cysteine 192.

Belongs to the protein-tyrosine phosphatase family. Atypical dual-specificity phosphatase Siw14-like subfamily. As to expression, expressed in roots, leaves, stems, flowers and siliques.

It carries out the reaction 5-diphospho-1D-myo-inositol 1,2,3,4,6-pentakisphosphate + H2O = 1D-myo-inositol hexakisphosphate + phosphate + H(+). The catalysed reaction is 1,5-bis(diphospho)-1D-myo-inositol 2,3,4,6-tetrakisphosphate + H2O = 1-diphospho-1D-myo-inositol 2,3,4,5,6-pentakisphosphate + phosphate + 2 H(+). The enzyme catalyses 3,5-bis(diphospho)-1D-myo-inositol 1,2,4,6-tetrakisphosphate + H2O = 3-diphospho-1D-myo-inositol 1,2,4,5,6-pentakisphosphate + phosphate + 2 H(+). It catalyses the reaction 6-diphospho-1D-myo-inositol pentakisphosphate + H2O = 1D-myo-inositol hexakisphosphate + phosphate + H(+). Functionally, cleaves the beta-phosphate at the 5-position of soluble inositol pyrophosphates. Has highest activity on 5-diphosphoinositol 1,2,3,4,6-pentakisphosphate (5-InsP(7)), 1,5-bis-diphosphoinositol 2,3,4,6-tetrakisphosphate (1,5-InsP(8)) and 3,5-InsP(8). Possesses phosphotyrosine phosphatase activity in vitro. Dephosphorylates the phosphoinositides PI(3,5)P2. Hydrolyzes para-nitrophenyl phosphate and O-methylfluorescein phosphate in vitro. The sequence is that of Inositol diphosphatase DSP2 from Arabidopsis thaliana (Mouse-ear cress).